A 64-amino-acid polypeptide reads, in one-letter code: Long neurotoxin MS4 (64 aa).

5 cysteine pairs are disulfide-bonded: C3-C24, C6-C11, C17-C41, C45-C57, and C58-C63.

This sequence belongs to the three-finger toxin family. Ancestral subfamily. Expressed by the venom gland.

It localises to the secreted. Its function is as follows. Produces peripheral paralysis by blocking neuromuscular transmission at the postsynaptic site. Weak inhibitor of the endogenous nicotinic acetylcholine receptors (nAChR) in the human rhabdomyosarcoma TE 671 cell line with an IC(50) of 690 mM. This neurotoxin is lethal to zebrafish by injection at the back of the dorsolateral region, but is not toxic to mice by intraperitoneal injection. This Micrurus surinamensis (Surinam coral snake) protein is Long neurotoxin MS4.